A 573-amino-acid polypeptide reads, in one-letter code: Sterol esterase 1 (573 aa).

Residues 1-12 (MGVSAVLKRARN) lie on the Cytoplasmic side of the membrane. The stretch at 13–33 (LLATFIVCCFMAVVLVLALAH) is an intramembrane region. At 34 to 573 (HFINEHRDTR…TELEMVAEKA (540 aa)) the chain is on the cytoplasmic side. The active-site Nucleophile is the Ser-315. Catalysis depends on charge relay system residues Asp-489 and His-520.

It belongs to the AB hydrolase superfamily. In terms of processing, not N-glycosylated.

The protein localises to the lipid droplet. It localises to the membrane. It carries out the reaction a sterol ester + H2O = a sterol + a fatty acid + H(+). Its function is as follows. Mediates the hydrolysis of steryl esters, thereby playing a central role in lipid metabolism. Under heme-deficient conditions, it constitutes the major steryl ester hydrolase, suggesting that it plays a central role in mobilization of steryl esters under anaerobic conditions. This Saccharomyces cerevisiae (strain ATCC 204508 / S288c) (Baker's yeast) protein is Sterol esterase 1 (YEH1).